A 370-amino-acid chain; its full sequence is Sensor protein GtcS (370 aa).

Transmembrane regions (helical) follow at residues 2-22 (ITAYILFTVTVGVTNSIVFYL) and 40-60 (AWIVAWRLMEMVIFALSVYLY). Positions 66–118 (KRITGPLEKITDAIQKMREGEFAQRLCFKADYELTLIQEHFNEMVAHLEKTEA) constitute an HAMP domain. The region spanning 133–355 (DLSHDFKTPI…RLENDLPYRL (223 aa)) is the Histidine kinase domain.

Its subcellular location is the cell membrane. The enzyme catalyses ATP + protein L-histidine = ADP + protein N-phospho-L-histidine.. Its function is as follows. Member of the two-component regulatory system GtcS/GtcR which may act in the control of the transcription of the grs operon which encodes the multienzymes involved in the biosynthesis of the peptide antibiotic gramicidin S. Probably activates GtcR by phosphorylation. This Aneurinibacillus migulanus (Bacillus migulanus) protein is Sensor protein GtcS (gtcS).